The primary structure comprises 217 residues: Uracil-DNA glycosylase (217 aa).

D62 functions as the Proton acceptor in the catalytic mechanism.

The protein belongs to the uracil-DNA glycosylase (UDG) superfamily. UNG family.

Its subcellular location is the cytoplasm. The catalysed reaction is Hydrolyzes single-stranded DNA or mismatched double-stranded DNA and polynucleotides, releasing free uracil.. Functionally, excises uracil residues from the DNA which can arise as a result of misincorporation of dUMP residues by DNA polymerase or due to deamination of cytosine. The protein is Uracil-DNA glycosylase of Streptococcus pyogenes serotype M49 (strain NZ131).